A 115-amino-acid polypeptide reads, in one-letter code: Large ribosomal subunit protein bL19 (115 aa).

This sequence belongs to the bacterial ribosomal protein bL19 family.

Functionally, this protein is located at the 30S-50S ribosomal subunit interface and may play a role in the structure and function of the aminoacyl-tRNA binding site. This Buchnera aphidicola subsp. Acyrthosiphon pisum (strain APS) (Acyrthosiphon pisum symbiotic bacterium) protein is Large ribosomal subunit protein bL19 (rplS).